The following is a 340-amino-acid chain: Phenylalanine--tRNA ligase alpha subunit (340 aa).

Glu255 provides a ligand contact to Mg(2+).

It belongs to the class-II aminoacyl-tRNA synthetase family. Phe-tRNA synthetase alpha subunit type 1 subfamily. In terms of assembly, tetramer of two alpha and two beta subunits. Mg(2+) is required as a cofactor.

The protein resides in the cytoplasm. It catalyses the reaction tRNA(Phe) + L-phenylalanine + ATP = L-phenylalanyl-tRNA(Phe) + AMP + diphosphate + H(+). The protein is Phenylalanine--tRNA ligase alpha subunit of Exiguobacterium sibiricum (strain DSM 17290 / CCUG 55495 / CIP 109462 / JCM 13490 / 255-15).